The chain runs to 173 residues: NADH-ubiquinone oxidoreductase chain 6 (173 aa).

Helical transmembrane passes span 1-21 (MTYF…AVAS), 27-47 (YGVV…VNLG), 48-68 (VSFV…VVFV), 87-107 (VMGY…LGGF), and 139-159 (YGVG…FVVL).

This sequence belongs to the complex I subunit 6 family.

It localises to the mitochondrion membrane. The enzyme catalyses a ubiquinone + NADH + 5 H(+)(in) = a ubiquinol + NAD(+) + 4 H(+)(out). In terms of biological role, core subunit of the mitochondrial membrane respiratory chain NADH dehydrogenase (Complex I) that is believed to belong to the minimal assembly required for catalysis. Complex I functions in the transfer of electrons from NADH to the respiratory chain. The immediate electron acceptor for the enzyme is believed to be ubiquinone. The chain is NADH-ubiquinone oxidoreductase chain 6 (MT-ND6) from Coturnix japonica (Japanese quail).